A 346-amino-acid chain; its full sequence is Enkurin domain-containing protein 1 (346 aa).

3 disordered regions span residues 1 to 24, 88 to 107, and 113 to 132; these read MCEGPSRISGPIPPDPTLCPDYYR, SGVSPKRKNPKDHEKENLRR, and RRFQDQERSREQGQPKPLKA. Serine 91 carries the post-translational modification Phosphoserine. 2 stretches are compositionally biased toward basic and acidic residues: residues 98 to 107 and 113 to 125; these read KDHEKENLRR and RRFQDQERSREQG. At serine 136 the chain carries Phosphoserine. The 93-residue stretch at 251–343 folds into the Enkurin domain; it reads ERRDLWRKEA…IFSRPKVFVK (93 aa). The segment at 259 to 280 is disordered; it reads EAEARQRSQPDPSMPPGHTLMP.

Interacts with alpha-tubulin. Interacts (via central region) with CCP110 (via N-terminal region); competes with CEP97 for binding to CCP110. Widely expressed with highest levels in testis and lung.

It is found in the cytoplasm. The protein resides in the cytoskeleton. Its subcellular location is the microtubule organizing center. It localises to the centrosome. The protein localises to the centriole. It is found in the cilium basal body. The protein resides in the cell projection. Its subcellular location is the cilium. It localises to the spindle. The protein localises to the spindle pole. It is found in the cilium axoneme. In terms of biological role, microtubule-binding protein which regulates microtubule organization and stability. Promotes the stability of astral microtubules and facilitates the proper orientation of the mitotic spindle. This allows the oriented division of basal keratinocytes and contributes to epidermal stratification. Required for the assembly of both primary and motile cilia. Destabilizes the interaction between CCP110 and CEP97 by competing with CEP97 for binding to CCP110 which promotes the removal of CCP110 and CEP97 from the mother centriole and allows the initiation of ciliogenesis. This chain is Enkurin domain-containing protein 1 (Enkd1), found in Mus musculus (Mouse).